The primary structure comprises 72 residues: uncharacterized protein (72 aa).

This is an uncharacterized protein from Saccharomyces cerevisiae (strain ATCC 204508 / S288c) (Baker's yeast).